A 132-amino-acid chain; its full sequence is U-scoloptoxin(11)-Sa1a (132 aa).

A signal peptide spans 1 to 19 (MIRFFAFVLFFATQELILC).

Belongs to the scoloptoxin-11 family. In terms of processing, contains 5 disulfide bonds. As to expression, expressed by the venom gland.

It is found in the secreted. The protein is U-scoloptoxin(11)-Sa1a of Scolopendra alternans (Florida Keys giant centipede).